Consider the following 463-residue polypeptide: Chaperone SurA (463 aa).

Positions 1-25 are cleaved as a signal peptide; it reads MTKPFSVVLASLLAITSTVSPLASA. PpiC domains are found at residues 174–276 and 289–388; these read GSQY…KLVE and VTEY…QRVG. Disordered regions lie at residues 329–348 and 431–463; these read ATAKESSEDTNSRGQGGDLG and YRTGDRADDNATAAPAKSPDPAAPSPPPAKPTR. Positions 441 to 450 are enriched in low complexity; it reads ATAAPAKSPD. The span at 451 to 463 shows a compositional bias: pro residues; the sequence is PAAPSPPPAKPTR.

Its subcellular location is the periplasm. The catalysed reaction is [protein]-peptidylproline (omega=180) = [protein]-peptidylproline (omega=0). In terms of biological role, chaperone involved in the correct folding and assembly of outer membrane proteins. Recognizes specific patterns of aromatic residues and the orientation of their side chains, which are found more frequently in integral outer membrane proteins. May act in both early periplasmic and late outer membrane-associated steps of protein maturation. The chain is Chaperone SurA from Xanthomonas axonopodis pv. citri (strain 306).